Consider the following 176-residue polypeptide: Mitochondrial inner membrane protein Mpv17 (176 aa).

4 consecutive transmembrane segments (helical) span residues 18-38 (VQVL…QQLV), 53-73 (TMVS…YKVL), 94-114 (GGFA…LNGL), and 131-151 (LITN…LVPL).

It belongs to the peroxisomal membrane protein PXMP2/4 family. Ubiquitous. Expressed in pancreas, kidney, muscle, liver, lung, placenta, brain and heart.

The protein localises to the mitochondrion inner membrane. Functionally, non-selective channel that modulates the membrane potential under normal conditions and oxidative stress, and is involved in mitochondrial homeostasis. Involved in mitochondrial deoxynucleoside triphosphates (dNTP) pool homeostasis and mitochondrial DNA (mtDNA) maintenance. May be involved in the regulation of reactive oxygen species metabolism and the control of oxidative phosphorylation. This is Mitochondrial inner membrane protein Mpv17 from Homo sapiens (Human).